Here is a 476-residue protein sequence, read N- to C-terminus: NAD(+) hydrolase ThsA (476 aa).

Positions 4 to 283 constitute a Deacetylase sirtuin-type domain; it reads NPIVELFIKD…QRIENNIKTK (280 aa). Ala23, Asp114, and His152 together coordinate NAD(+). His152 functions as the Proton acceptor in the catalytic mechanism. Positions 284–476 are SLOG (STALD) domain, binds 3'cADPR; sequence TVFLSGSAVE…IIEFVEILSN (193 aa). 8 residues coordinate 3'cADPR: Gly289, Ser290, Leu326, Phe357, Arg371, Lys388, Gly399, and Glu403.

Belongs to the soluble Thoeris ThsA family. In terms of assembly, homotetramer formed by dimer of dimers; homooctamers are occasionally seen. Not seen to interact with ThsB. In the absence of the signal generated by ThsB, 63% monomer and 20% homotetramer; in the presence of the ThsB signal product 40% of the protein is dimeric. Homotetramer in solution; probably dimerizes via the N-terminal sirtuin-like domain.

It is found in the cytoplasm. The catalysed reaction is NAD(+) + H2O = ADP-D-ribose + nicotinamide + H(+). With respect to regulation, activated by a molecule generated by endogenous ThsB (AC J8G8J6) or ThsB' (AC J8CSK2); activation in vitro is 50-100x more sensitive to 3' cyclic ADP-D-ribose (3'cADPR) than 2'cADPR. 3'cADPR activates the NADase function of ThsA by binding to the SLOG domain, which changes its tetramer organization, allowing NAD to access the active site. Also activated by a signal molecule generated by B.dafuensis TIR1 (AC A0A5B8Z670) and TIR2 (AC A0A5B8Z260), and by BdTIR (AC I1GTC2), a plant protein involved in defense against bacterial infection. The signal produced by BdTIR is probably 2'cADPR, which activates this protein, the signal produced by endogenous ThsB' is probably 3'cADPR. Its function is as follows. NAD(+) hydrolyzing component (NADase) of the Thoeris antiviral defense system, composed of ThsA and ThsB. Activated by a signal molecule generated by endogenous ThsB (AC J8G8J6) or ThsB' (AC J8CSK2, probably 3'cADPR), by TIR1 and TIR2 from B.dafuensis or by BdTIR from B.distachyon (AC I1GTC2, probably 2'cADPR). Upon activation binds and hydrolyzes NAD(+), leading to cell death and inhibition of phage replication. Not seen to bind DNA. Activation is 50-100x more sensitive to 3' cyclic ADP-D-ribose (3'cADPR) than 2'cADPR. In another paper ThsA is not activated by any tested cADPR isomer, although it binds 3'cADPR; it was suggested the protein is already in a fully active state. Expression of ThsA and ThsB in B.subtilis (strain BEST7003) confers resistance to phages phi29, SBSphiC, SBSphiJ and SPO1. At multiplicity of infection (MOI) of 0.05 Thoeris-encoding cultures grow normally when infected with SPO1, at MOI 5 cultures collapse prematurely by 90 minutes post-infection, thus the phage are not able to complete a replication cycle. NAD(+) levels fall and ADP-D-ribose levels rise 60 minutes post-infection. Thoeris cultures eventually recover, but retain the same susceptibility to SPO1. The protein is NAD(+) hydrolase ThsA of Bacillus cereus (strain MSX-D12).